We begin with the raw amino-acid sequence, 53 residues long: Mitochondrial sheath formation-associated protein (53 aa).

Mitochondrial intermembrane segments follow at residues 1–6 and 1–7; these read MIVLGW and MIVLGWM. Helical transmembrane passes span 7–23 and 8–24; these read MLFV…PEAM and LFVG…EAMP. Cytoplasmic segments follow at residues 24–53 and 25–40; these read PPTL…ELLL and PTLK…ENKA.

Interacts with VDAC3. As to expression, testis specific. Detected only in germ cells at the step of spermiogenesis (at protein level). Expressed during the middle steps of spermatid development. Testis specific. Detected only in germ cells at the step of spermiogenesis (at protein level). Expressed in the late steps of spermatid development.

The protein localises to the mitochondrion outer membrane. Its function is as follows. Regulates sperm development. May be involved in mitochondrial sheath formation. The protein is Mitochondrial sheath formation-associated protein of Mus musculus (Mouse).